A 415-amino-acid polypeptide reads, in one-letter code: Serine/threonine transporter SstT (415 aa).

The next 8 helical transmembrane spans lie at 23–43 (ILIG…AAIA), 47–67 (LGTL…LMLV), 85–105 (ILFL…LFSF), 144–164 (ALLN…GFAL), 181–201 (AVTF…FGLV), 220–240 (LLVL…LLVF), 293–313 (IPLG…VLTL), and 333–353 (VVAS…LLLI).

The protein belongs to the dicarboxylate/amino acid:cation symporter (DAACS) (TC 2.A.23) family.

It localises to the cell inner membrane. The enzyme catalyses L-serine(in) + Na(+)(in) = L-serine(out) + Na(+)(out). It carries out the reaction L-threonine(in) + Na(+)(in) = L-threonine(out) + Na(+)(out). Involved in the import of serine and threonine into the cell, with the concomitant import of sodium (symport system). This is Serine/threonine transporter SstT from Klebsiella pneumoniae subsp. pneumoniae (strain ATCC 700721 / MGH 78578).